The following is a 188-amino-acid chain: Adrenodoxin, mitochondrial (188 aa).

Residues 1 to 64 (MAAAPGARLL…RPLSVSARAR (64 aa)) constitute a mitochondrion transit peptide. Phosphoserine is present on Ser-67. The 2Fe-2S ferredoxin-type domain maps to 69-175 (DKVTVHFKNR…NMTVRVPEAV (107 aa)). At Lys-70 the chain carries N6-acetyllysine; alternate. Lys-70 carries the N6-succinyllysine; alternate modification. Residues Cys-110, Cys-116, Cys-119, and Cys-156 each coordinate [2Fe-2S] cluster. At Lys-162 the chain carries N6-succinyllysine. Phosphoserine is present on Ser-181.

This sequence belongs to the adrenodoxin/putidaredoxin family. In terms of assembly, interacts with CYP11A1. It depends on [2Fe-2S] cluster as a cofactor. Found in all tissues, most abundant in adrenals, ovaries and testes.

The protein localises to the mitochondrion matrix. Functionally, essential for the synthesis of various steroid hormones. Participates in the reduction of mitochondrial cytochrome P450 for steroidogenesis. Transfers electrons from adrenodoxin reductase to CYP11A1, a cytochrome P450 that catalyzes cholesterol side-chain cleavage. Does not form a ternary complex with adrenodoxin reductase and CYP11A1 but shuttles between the two enzymes to transfer electrons. This is Adrenodoxin, mitochondrial (Fdx1) from Rattus norvegicus (Rat).